Reading from the N-terminus, the 114-residue chain is Iron-sulfur cluster insertion protein ErpA (114 aa).

Iron-sulfur cluster contacts are provided by cysteine 42, cysteine 106, and cysteine 108.

This sequence belongs to the HesB/IscA family. As to quaternary structure, homodimer. Requires iron-sulfur cluster as cofactor.

In terms of biological role, required for insertion of 4Fe-4S clusters for at least IspG. The sequence is that of Iron-sulfur cluster insertion protein ErpA from Proteus mirabilis (strain HI4320).